Consider the following 161-residue polypeptide: Small ribosomal subunit protein uS9 (161 aa).

The protein belongs to the universal ribosomal protein uS9 family.

This chain is Small ribosomal subunit protein uS9, found in Rickettsia felis (strain ATCC VR-1525 / URRWXCal2) (Rickettsia azadi).